The chain runs to 89 residues: Small ribosomal subunit protein uS15 (89 aa).

The tract at residues 1–24 is disordered; the sequence is MALTQTKKQELISQYQAHETDTGS.

Belongs to the universal ribosomal protein uS15 family. As to quaternary structure, part of the 30S ribosomal subunit. Forms a bridge to the 50S subunit in the 70S ribosome, contacting the 23S rRNA.

One of the primary rRNA binding proteins, it binds directly to 16S rRNA where it helps nucleate assembly of the platform of the 30S subunit by binding and bridging several RNA helices of the 16S rRNA. Functionally, forms an intersubunit bridge (bridge B4) with the 23S rRNA of the 50S subunit in the ribosome. The sequence is that of Small ribosomal subunit protein uS15 from Microcystis aeruginosa (strain NIES-843 / IAM M-2473).